We begin with the raw amino-acid sequence, 397 residues long: HTH-type transcriptional regulator GalR (397 aa).

HTH lysR-type domains are found at residues 7-64 and 99-156; these read PNLM…MRLT and FQAR…LQPT. DNA-binding regions (H-T-H motif) lie at residues 24–43 and 116–135; these read VSRA…RAIA and MQTV…AALK.

This sequence belongs to the LysR transcriptional regulatory family.

Transcriptional regulator for the galBCD and galTAP operons, encoding genes of the gallate degradation pathway. The polypeptide is HTH-type transcriptional regulator GalR (galR) (Pseudomonas putida (strain ATCC 47054 / DSM 6125 / CFBP 8728 / NCIMB 11950 / KT2440)).